A 307-amino-acid chain; its full sequence is Aspartate carbamoyltransferase catalytic subunit (307 aa).

Residues Arg59 and Thr60 each coordinate carbamoyl phosphate. An L-aspartate-binding site is contributed by Lys87. Carbamoyl phosphate-binding residues include Arg109, His137, and Gln140. Positions 173 and 223 each coordinate L-aspartate. 2 residues coordinate carbamoyl phosphate: Gly266 and Pro267.

It belongs to the aspartate/ornithine carbamoyltransferase superfamily. ATCase family. In terms of assembly, heterododecamer (2C3:3R2) of six catalytic PyrB chains organized as two trimers (C3), and six regulatory PyrI chains organized as three dimers (R2).

It carries out the reaction carbamoyl phosphate + L-aspartate = N-carbamoyl-L-aspartate + phosphate + H(+). Its pathway is pyrimidine metabolism; UMP biosynthesis via de novo pathway; (S)-dihydroorotate from bicarbonate: step 2/3. Its function is as follows. Catalyzes the condensation of carbamoyl phosphate and aspartate to form carbamoyl aspartate and inorganic phosphate, the committed step in the de novo pyrimidine nucleotide biosynthesis pathway. The chain is Aspartate carbamoyltransferase catalytic subunit from Helicobacter pylori (strain Shi470).